A 363-amino-acid chain; its full sequence is Peptide chain release factor 1 (363 aa).

Gln-237 bears the N5-methylglutamine mark. The segment covering 284–296 has biased composition (basic and acidic residues); sequence EDEKRRSAEESTR. The tract at residues 284 to 305 is disordered; the sequence is EDEKRRSAEESTRRSLVASGDR.

This sequence belongs to the prokaryotic/mitochondrial release factor family. Methylated by PrmC. Methylation increases the termination efficiency of RF1.

It is found in the cytoplasm. In terms of biological role, peptide chain release factor 1 directs the termination of translation in response to the peptide chain termination codons UAG and UAA. The sequence is that of Peptide chain release factor 1 from Shewanella baltica (strain OS195).